The primary structure comprises 219 residues: Interleukin-6 (219 aa).

A signal peptide spans Met-1 to Gly-20. An intrachain disulfide couples Cys-103 to Cys-111.

Belongs to the IL-6 superfamily. Component of a hexamer of two molecules each of IL6, IL6R and IL6ST; first binds to IL6R to associate with the signaling subunit IL6ST. As to expression, expressed in spleen, gill and gastrointestinal tract, ovary and brain. Highest expression in ovary.

It is found in the secreted. Functionally, cytokine with a wide variety of biological functions in immunity, tissue regeneration, and metabolism. Binds to IL6R, then the complex associates to the signaling subunit IL6ST/gp130 to trigger the intracellular IL6-signaling pathway. The interaction with the membrane-bound IL6R and IL6ST stimulates 'classic signaling', whereas the binding of IL6 and soluble IL6R to IL6ST stimulates 'trans-signaling'. Alternatively, 'cluster signaling' occurs when membrane-bound IL6:IL6R complexes on transmitter cells activate IL6ST receptors on neighboring receiver cells. In Oncorhynchus mykiss (Rainbow trout), this protein is Interleukin-6 (il6).